We begin with the raw amino-acid sequence, 293 residues long: 4-diphosphocytidyl-2-C-methyl-D-erythritol kinase (293 aa).

Residue Lys16 is part of the active site. An ATP-binding site is contributed by 99–109 (PMGAGLGGGSS). Asp141 is a catalytic residue.

The protein belongs to the GHMP kinase family. IspE subfamily.

It catalyses the reaction 4-CDP-2-C-methyl-D-erythritol + ATP = 4-CDP-2-C-methyl-D-erythritol 2-phosphate + ADP + H(+). It functions in the pathway isoprenoid biosynthesis; isopentenyl diphosphate biosynthesis via DXP pathway; isopentenyl diphosphate from 1-deoxy-D-xylulose 5-phosphate: step 3/6. In terms of biological role, catalyzes the phosphorylation of the position 2 hydroxy group of 4-diphosphocytidyl-2C-methyl-D-erythritol. The sequence is that of 4-diphosphocytidyl-2-C-methyl-D-erythritol kinase from Paraburkholderia phytofirmans (strain DSM 17436 / LMG 22146 / PsJN) (Burkholderia phytofirmans).